Consider the following 326-residue polypeptide: Vomeronasal type-1 receptor 94 (326 aa).

Topologically, residues 1–32 are extracellular; that stretch reads MSEILLFSPQPLFSYTMNKYSRLYTNSNIRNT. The helical transmembrane segment at 33–53 threads the bilayer; that stretch reads FFSEIGIGIAANSLLLLFHIF. Topologically, residues 54–65 are cytoplasmic; it reads KFIRGQRSRLTD. Residues 66-86 form a helical membrane-spanning segment; that stretch reads LPIGLLSLIHLLKLLMIAFIA. Topologically, residues 87-110 are extracellular; sequence TDIFISWRGWDDIICKFLVYLYRS. Residues C101 and C188 are joined by a disulfide bond. Residues 111–130 form a helical membrane-spanning segment; sequence FRGLSLCTTCMLSVLQAITL. The Cytoplasmic portion of the chain corresponds to 131-150; sequence SPRSSCLAKFKHKSPHHVSC. A helical membrane pass occupies residues 151–171; the sequence is AILSLSVLYMFISSHLLVSLI. At 172–203 the chain is on the extracellular side; that stretch reads ATPNLTTNVFMYVSESCSILPMSYLMQSMFST. N175 carries an N-linked (GlcNAc...) asparagine glycan. Residues 204–224 form a helical membrane-spanning segment; sequence LLAIRDVFLISLMVLSTCYMV. The Cytoplasmic portion of the chain corresponds to 225–254; the sequence is ALLCRHRKQTRHLQGTSLSPKASPEKKATH. The helical transmembrane segment at 255 to 275 threads the bilayer; the sequence is SILMLMSFFVLMSILDSIVSC. At 276–285 the chain is on the extracellular side; sequence SRTMFLYDPT. The chain crosses the membrane as a helical span at residues 286-306; that stretch reads SYAIQIFVSHIYATVSPFVFM. Topologically, residues 307 to 326 are cytoplasmic; it reads SNEKHIVNFLRSLCKRVINV.

This sequence belongs to the G-protein coupled receptor 1 family.

Its subcellular location is the cell membrane. In terms of biological role, putative pheromone receptor implicated in the regulation of social as well as reproductive behavior. This is Vomeronasal type-1 receptor 94 (Vom1r94) from Rattus norvegicus (Rat).